The primary structure comprises 2595 residues: MASLFHQLQILVWKNWLGVKRQPLWTLVLILWPVIIFIILAITRTKFPPTAKPTCYLAPRNLPSTGFFPFLQTLLCDTDSKCKDTPYGPQDLLRRKGIDDALFKDSEILRKSSNLDKDSSLSFQSTQVPERRHASLATVFPSPSSDLEIPGTYTFNGSQVLARILGLEKLLKQNSTSEDIRRELCDSYSGYIVDDAFSWTFLGRNVFNKFCLSNMTLLESSLQELNKQFSQLSSDPNNQKIVFQEIVRMLSFFSQVQEQKAVWQLLSSFPNVFQNDTSLSNLFDVLRKANSVLLVVQKVYPRFATNEGFRTLQKSVKHLLYTLDSPAQGDSDNITHVWNEDDGQTLSPSSLAAQLLILENFEDALLNISANSPYIPYLACVRNVTDSLARGSPENLRLLQSTIRFKKSFLRNGSYEDYFPPVPEVLKSKLSQLRNLTELLCESETFSLIEKSCQLSDMSFGSLCEESEFDLQLLEAAELGTEIAASLLYHDNVISKKVRDLLTGDPSKINLNMDQFLEQALQMNYLENITQLIPIIEAMLHVNNSADASEKPGQLLEMFKNVEELKEDLRRTTGMSNRTIDKLLAIPIPDNRAEIISQVFWLHSCDTNITTPKLEDAMKEFCNLSLSERSRQSYLIGLTLLHYLNIYNFTYKVFFPRKDQKPVEKMMELFIRLKEILNQMASGTHPLLDKMRSLKQMHLPRSVPLTQAMYRSNRMNTPQGSFSTISQALCSQGITTEYLTAMLPSSQRPKGNHTKDFLTYKLTKEQIASKYGIPINSTPFCFSLYKDIINMPAGPVIWAFLKPMLLGRILYAPYNPVTKAIMEKSNVTLRQLAELREKSQEWMDKSPLFMNSFHLLNQAIPMLQNTLRNPFVQVFVKFSVGLDAVELLKQIDELDILRLKLENNIDIIDQLNTLSSLTVNISSCVLYDRIQAAKTIDEMEREAKRLYKSNELFGSVIFKLPSNRSWHRGYDSGNVFLPPVIKYTIRMSLKTAQTTRSLRTKIWAPGPHNSPSHNQIYGRAFIYLQDSIERAIIELQTGRNSQEIAVQVQAIPYPCFMKDNFLTSVSYSLPIVLMVAWVVFIAAFVKKLVYEKDLRLHEYMKMMGVNSCSHFFAWLIESVGFLLVTIVILIIILKFGNILPKTNGFILFLYFSDYSFSVIAMSYLISVFFNNTNIAALIGSLIYIIAFFPFIVLVTVENELSYVLKVFMSLLSPTAFSYASQYIARYEEQGIGLQWENMYTSPVQDDTTSFGWLCCLILADSFIYFLIAWYVRNVFPGTYGMAAPWYFPILPSYWKERFGCAEVKPEKSNGLMFTNIMMQNTNPSASPEYMFSSNIEPEPKDLTVGVALHGVTKIYGSKVAVDNLNLNFYEGHITSLLGPNGAGKTTTISMLTGLFGASAGTIFVYGKDIKTDLHTVRKNMGVCMQHDVLFSYLTTKEHLLLYGSIKVPHWTKKQLHEEVKRTLKDTGLYSHRHKRVGTLSGGMKRKLSISIALIGGSRVVILDEPSTGVDPCSRRSIWDVISKNKTARTIILSTHHLDEAEVLSDRIAFLEQGGLRCCGSPFYLKEAFGDGYHLTLTKKKSPNLNANAVCDTMAVTAMIQSHLPEAYLKEDIGGELVYVLPPFSTKVSGAYLSLLRALDNGMGDLNIGCYGISDTTVEEVFLNLTKESQKNSAMSLEHLTQKKIGNSNANGISTPDDLSVSSSNFTDRDDKILTRGERLDGFGLLLKKIMAILIKRFHHTRRNWKGLIAQVILPIVFVTTAMGLGTLRNSSNSYPEIQISPSLYGTSEQTAFYANYHPSTEALVSAMWDFPGIDNMCLNTSDLQCLNKDSLEKWNTSGEPITNFGVCSCSENVQECPKFNYSPPHRRTYSSQVIYNLTGQRVENYLISTANEFVQKRYGGWSFGLPLTKDLRFDITGVPANRTLAKVWYDPEGYHSLPAYLNSLNNFLLRVNMSKYDAARHGIIMYSHPYPGVQDQEQATISSLIDILVALSILMGYSVTTASFVTYVVREHQTKAKQLQHISGIGVTCYWVTNFIYDMVFYLVPVAFSIGIIAIFKLPAFYSENNLGAVSLLLLLFGYATFSWMYLLAGLFHETGMAFITYVCVNLFFGINSIVSLSVVYFLSKEKPNDPTLELISETLKRIFLIFPQFCFGYGLIELSQQQSVLDFLKAYGVEYPNETFEMNKLGAMFVALVSQGTMFFSLRLLINESLIKKLRLFFRKFNSSHVRETIDEDEDVRAERLRVESGAAEFDLVQLYCLTKTYQLIHKKIIAVNNISIGIPAGECFGLLGVNGAGKTTIFKMLTGDIIPSSGNILIRNKTGSLGHVDSHSSLVGYCPQEDALDDLVTVEEHLYFYARVHGIPEKDIKETVHKLLRRLHLMPFKDRATSMCSYGTKRKLSTALALIGKPSILLLDEPSSGMDPKSKRHLWKIISEEVQNKCSVILTSHSMEECEALCTRLAIMVNGKFQCIGSLQHIKSRFGRGFTVKVHLKNNKVTMETLTKFMQLHFPKTYLKDQHLSMLEYHVPVTAGGVANIFDLLETNKTALNITNFLVSQTTLEEVFINFAKDQKSYETADTSSQGSTISVDSQDDQMES.

The chain crosses the membrane as a helical span at residues 23–43; sequence PLWTLVLILWPVIIFIILAIT. N-linked (GlcNAc...) asparagine glycans are attached at residues Asn-156, Asn-174, Asn-214, Asn-275, Asn-333, Asn-367, Asn-383, Asn-412, Asn-435, Asn-528, Asn-543, Asn-577, Asn-608, Asn-623, Asn-648, Asn-752, Asn-826, Asn-920, and Asn-963. The next 3 membrane-spanning stretches (helical) occupy residues 1065-1085, 1112-1132, and 1145-1165; these read VSYSLPIVLMVAWVVFIAAFV, FAWLIESVGFLLVTIVILIII, and FILFLYFSDYSFSVIAMSYLI. The N-linked (GlcNAc...) asparagine glycan is linked to Asn-1170. A run of 3 helical transmembrane segments spans residues 1174–1194, 1200–1220, and 1250–1270; these read IAALIGSLIYIIAFFPFIVLV, LSYVLKVFMSLLSPTAFSYAS, and FGWLCCLILADSFIYFLIAWY. Positions 1346 to 1577 constitute an ABC transporter 1 domain; that stretch reads VALHGVTKIY…FGDGYHLTLT (232 aa). 1378–1385 is an ATP binding site; the sequence is GPNGAGKT. Residues Asn-1524, Asn-1663, and Asn-1704 are each glycosylated (N-linked (GlcNAc...) asparagine). Residues 1747–1767 form a helical membrane-spanning segment; sequence LIAQVILPIVFVTTAMGLGTL. 6 N-linked (GlcNAc...) asparagine glycosylation sites follow: Asn-1769, Asn-1819, Asn-1835, Asn-1876, Asn-1921, and Asn-1952. A run of 4 helical transmembrane segments spans residues 1979–1999, 2035–2055, 2072–2092, and 2103–2123; these read ATISSLIDILVALSILMGYSV, FIYDMVFYLVPVAFSIGIIAI, LLLLLFGYATFSWMYLLAGLF, and VCVNLFFGINSIVSLSVVYFL. A glycan (N-linked (GlcNAc...) asparagine) is linked at Asn-2178. The helical transmembrane segment at 2187 to 2207 threads the bilayer; the sequence is GAMFVALVSQGTMFFSLRLLI. Residues Asn-2208 and Asn-2223 are each glycosylated (N-linked (GlcNAc...) asparagine). One can recognise an ABC transporter 2 domain in the interval 2254–2489; it reads VQLYCLTKTY…FGRGFTVKVH (236 aa). Residues 2270-2290 form a helical membrane-spanning segment; sequence IIAVNNISIGIPAGECFGLLG. An ATP-binding site is contributed by 2290 to 2297; sequence GVNGAGKT. Asn-2318, Asn-2542, and Asn-2547 each carry an N-linked (GlcNAc...) asparagine glycan. A disordered region spans residues 2571 to 2595; it reads SYETADTSSQGSTISVDSQDDQMES. Residues 2574–2587 are compositionally biased toward polar residues; it reads TADTSSQGSTISVD.

The protein belongs to the ABC transporter superfamily. ABCA family. As to quaternary structure, interacts with NR1H2 and ABCA1; this interaction is required for ABCA1 localization to the cell surface and is necessary for its normal activity and stability. In terms of tissue distribution, mainly expressed in the stomach, placenta, testis and fetal brain. Expressed in the upper epidermal layers, mainly the granular layers, of skin. Expressed throughout the normal interfollicular epidermis with prominent expression in the stratum granulosum. Expressed in alpha and beta cells of pancreatic islets.

It is found in the cytoplasmic vesicle. It localises to the secretory vesicle membrane. The protein localises to the golgi apparatus membrane. It catalyses the reaction ATP + H2O + phospholipidSide 1 = ADP + phosphate + phospholipidSide 2.. The enzyme catalyses a beta-D-glucosylceramide(in) + ATP + H2O = a beta-D-glucosylceramide(out) + ADP + phosphate + H(+). Transports lipids such as glucosylceramides from the outer to the inner leaflet of lamellar granules (LGs) membrane, whereby the lipids are finally transported to the keratinocyte periphery via the trans-Golgi network and LGs and released to the apical surface of the granular keratinocytes to form lipid lamellae in the stratum corneum of the epidermis, which is essential for skin barrier function. In the meantime, participates in the transport of the lamellar granules-associated proteolytic enzymes, in turn regulates desquamation and keratinocyte differentiation. Furthermore, is essential for the regulation of cellular cholesterol homeostasis by regulating ABCA1-dependent cholesterol efflux from macrophages through interaction with NR1H2 and ABCA1. Plays pleiotropic roles in regulating glucose stimulated insulin secretion from beta cells, regulating the morphology and fusion of insulin granules, lipid raft abundance and the actin cytoskeleton. Also involved in lung surfactant biogenesis. This chain is Glucosylceramide transporter ABCA12, found in Homo sapiens (Human).